The sequence spans 200 residues: Troponin I-like protein (200 aa).

Disordered stretches follow at residues 1–20 (MGDEEKRKMEEKERKKAEVR) and 181–200 (ENKADKKPEWALGSKKENEE). Residues 2 to 116 (GDEEKRKMEE…EDAKYDLEYE (115 aa)) adopt a coiled-coil conformation.

The protein belongs to the troponin I family. In terms of tissue distribution, expressed in salivary gland, gut, muscle and cuticle (at protein level).

Its function is as follows. Inhibits endothelial cell proliferation and angiogenesis in a vertebrate host. Probably required for efficient blood feeding on vertebrate hosts. This chain is Troponin I-like protein, found in Haemaphysalis longicornis (Bush tick).